Reading from the N-terminus, the 490-residue chain is Histone-lysine N-methyltransferase, H3 lysine-9 specific (490 aa).

One can recognise a Chromo domain in the interval 8-69 (YEVERIVDEK…RKRRLKGSNS (62 aa)). 2 disordered regions span residues 61-133 (KRRL…TALT) and 150-190 (KKLG…KPRN). Positions 102–114 (FSRELNVKKENKK) are enriched in basic and acidic residues. A compositionally biased stretch (polar residues) spans 115-133 (VFSSQTTKRQSRKQSTALT). Lysine 127 is modified (N6,N6,N6-trimethyllysine; alternate). The residue at position 127 (lysine 127) is an N6-methyllysine; alternate. Basic and acidic residues predominate over residues 155-168 (TRNEVKEESQKREL). A compositionally biased stretch (polar residues) spans 169-185 (VSNSIKEATSPKTSSIL). The Pre-SET domain occupies 258-325 (SGCNCSSLGG…ECPNRVVQRG (68 aa)). Zn(2+)-binding residues include cysteine 260, cysteine 262, cysteine 268, cysteine 276, cysteine 278, cysteine 307, cysteine 311, cysteine 313, and cysteine 317. The region spanning 328–452 (LPLEIFKTKE…PLEELTFDYA (125 aa)) is the SET domain. Residues 338 to 340 (KGW), tyrosine 381, arginine 406, and 407 to 410 (FFNH) each bind S-adenosyl-L-methionine. Cysteine 412 is a Zn(2+) binding site. The tract at residues 453-472 (GAKDFSPVQSQKSQQNRISK) is autoregulatory loop. Position 455 is an N6,N6,N6-trimethyllysine; by autocatalysis; alternate (lysine 455). Position 455 is an N6,N6-dimethyllysine; by autocatalysis; alternate (lysine 455). An N6-methyllysine; by autocatalysis; alternate modification is found at lysine 455. N6-methyllysine is present on lysine 464. Residues 473–489 (LRRQCKCGSANCRGWLF) enclose the Post-SET domain. Cysteine 477, cysteine 479, and cysteine 484 together coordinate Zn(2+). 477 to 478 (CK) is a binding site for S-adenosyl-L-methionine.

This sequence belongs to the class V-like SAM-binding methyltransferase superfamily. Histone-lysine methyltransferase family. Suvar3-9 subfamily. In terms of assembly, component of the Clr4 methyltransferase complex (ClrC) composed of at least clr4, rik1, pcu4, rbx1, raf1 and raf2. The cullin pcu4, rik1, raf1, raf2 and the ring-box protein rbx1 are components of an E3 ubiquitin ligase, whose activity is essential for heterochromatin assembly. Interacts directly with pcu4. Interacts with mlo3. Post-translationally, autocatalytic methylation of specific lysine residues in an internal loop (autoregulatory loop) promote a conformational switch that enhances the H3K9me activity of clr4.

The protein localises to the nucleus. Its subcellular location is the cytoplasm. The protein resides in the cytoskeleton. It is found in the microtubule organizing center. It localises to the spindle pole body. The protein localises to the chromosome. It carries out the reaction L-lysyl(9)-[histone H3] + 3 S-adenosyl-L-methionine = N(6),N(6),N(6)-trimethyl-L-lysyl(9)-[histone H3] + 3 S-adenosyl-L-homocysteine + 3 H(+). It catalyses the reaction N(6)-methyl-L-lysyl(9)-[histone H3] + S-adenosyl-L-methionine = N(6),N(6)-dimethyl-L-lysyl(9)-[histone H3] + S-adenosyl-L-homocysteine + H(+). The catalysed reaction is N(6),N(6)-dimethyl-L-lysyl(9)-[histone H3] + S-adenosyl-L-methionine = N(6),N(6),N(6)-trimethyl-L-lysyl(9)-[histone H3] + S-adenosyl-L-homocysteine + H(+). The enzyme catalyses L-lysyl-[protein] + S-adenosyl-L-methionine = N(6)-methyl-L-lysyl-[protein] + S-adenosyl-L-homocysteine + H(+). It carries out the reaction N(6)-methyl-L-lysyl-[protein] + S-adenosyl-L-methionine = N(6),N(6)-dimethyl-L-lysyl-[protein] + S-adenosyl-L-homocysteine + H(+). It catalyses the reaction N(6),N(6)-dimethyl-L-lysyl-[protein] + S-adenosyl-L-methionine = N(6),N(6),N(6)-trimethyl-L-lysyl-[protein] + S-adenosyl-L-homocysteine + H(+). The catalysed reaction is L-lysyl(9)-[histone H3] + S-adenosyl-L-methionine = N(6)-methyl-L-lysyl(9)-[histone H3] + S-adenosyl-L-homocysteine + H(+). With respect to regulation, an internal loop (autoregulatory loop) inhibits the catalytic activity of the enzyme by blocking the histone H3K9 substrate-binding pocket. Autocatalytic methylation of specific lysine residues in this loop promote a conformational switch that enhances the H3K9me activity of clr4. Histone methyltransferase which contributes to the establishment of heterochromatin by specifically methylating histone H3 to form H3K9me. Part of the Clr4 methyltransferase complex (ClrC). ClrC preferentially ubiquitylates H3K14 and ClrC-mediated H3 ubiquitination promotes clr4 methyltransferase activity. Clr4 functions as a reader and writer of H3K9 methylation. It sets the H3K9me mark and afterwards this H3K9me mark is recognized by the chromodomains of clr4 and swi6/HP1, which then recruit additional clr4 leading to the methylation of neighboring nucleosomes. H3K9me represents a specific tag for epigenetic transcriptional repression by recruiting swi6/HP1 to methylated histones which leads to transcriptional silencing within centromeric heterochromatin, telomeres, ribosomal DNA repeats, and the silent mating-type region. Clr4 methyltransferase activity promotes the assembly of a tripartite complex composed of ClrC and complexes involved in siRNA generation. Apart from H3K9, also methylates non-histone proteins such as mlo3. Interacts with mlo3 to promote the processing of centromeric and antisense RNAs. The sequence is that of Histone-lysine N-methyltransferase, H3 lysine-9 specific (clr4) from Schizosaccharomyces pombe (strain 972 / ATCC 24843) (Fission yeast).